Here is a 57-residue protein sequence, read N- to C-terminus: DNA-directed RNA polymerase subunit Rpo6 (57 aa).

The protein belongs to the archaeal Rpo6/eukaryotic RPB6 RNA polymerase subunit family. As to quaternary structure, part of the RNA polymerase complex.

It is found in the cytoplasm. The enzyme catalyses RNA(n) + a ribonucleoside 5'-triphosphate = RNA(n+1) + diphosphate. DNA-dependent RNA polymerase (RNAP) catalyzes the transcription of DNA into RNA using the four ribonucleoside triphosphates as substrates. The chain is DNA-directed RNA polymerase subunit Rpo6 from Thermococcus gammatolerans (strain DSM 15229 / JCM 11827 / EJ3).